The sequence spans 484 residues: MDFRILATSTSSLSKVSADALLIVVAGDPKQQGLDDPLDRVLSDAIAAGDLAFKAGRTLYLHRPLGVKAARVVFAVAGDAGPKAFKSAVAAGLGLIKPLGVKHLAVAASGAIEDSHAEAAAAAASDATYSYRHTKPSASPAPALQKITLLVDKAEAKAAQTGLSRGAAIALGVALARECANRPGNHCTPSFLAAEARKLAKLPRIKVDVLDRKACEKLGMGSFLAVAQGSDEPPKFIVLRYDGASRSDAPVVLVGKGITFDTGGISIKPAAEMDEMKYDMGGAASVLGSFRAVAELQPQVNVVGLIPSCENMPSGRAIKPGDVVTSMSGQTIEVLNTDAEGRLILCDALTYAERFKPAVVIDIATLTGACVIALGHHRSGLFSADDALADALLDAGSAGLDPAWRMPLDDEYEEALRSNFADMGNVGGRAGGAITAAMFLKKFTAKYRWAHLDIAGTAWKSGAAKGATGRPVPLLTHFVLSRTR.

Residues lysine 256 and aspartate 261 each coordinate Mn(2+). Residue lysine 268 is part of the active site. Residues aspartate 279, aspartate 338, and glutamate 340 each coordinate Mn(2+). Arginine 342 is a catalytic residue.

Belongs to the peptidase M17 family. Mn(2+) is required as a cofactor.

The protein resides in the cytoplasm. The catalysed reaction is Release of an N-terminal amino acid, Xaa-|-Yaa-, in which Xaa is preferably Leu, but may be other amino acids including Pro although not Arg or Lys, and Yaa may be Pro. Amino acid amides and methyl esters are also readily hydrolyzed, but rates on arylamides are exceedingly low.. It catalyses the reaction Release of an N-terminal amino acid, preferentially leucine, but not glutamic or aspartic acids.. In terms of biological role, presumably involved in the processing and regular turnover of intracellular proteins. Catalyzes the removal of unsubstituted N-terminal amino acids from various peptides. The chain is Probable cytosol aminopeptidase from Methylibium petroleiphilum (strain ATCC BAA-1232 / LMG 22953 / PM1).